Reading from the N-terminus, the 912-residue chain is Translation initiation factor IF-2 (912 aa).

Residues 185-204 (NATRPKRKTKEEKQKEREER) are disordered. Basic and acidic residues predominate over residues 193 to 204 (TKEEKQKEREER). In terms of domain architecture, tr-type G spans 411–581 (LRPPIVTIMG…LLEAELLDLK (171 aa)). The segment at 420 to 427 (GHVDHGKT) is G1. 420–427 (GHVDHGKT) is a GTP binding site. The tract at residues 445 to 449 (GITQH) is G2. A G3 region spans residues 467 to 470 (DTPG). GTP contacts are provided by residues 467–471 (DTPGH) and 521–524 (NKID). The G4 stretch occupies residues 521–524 (NKID). Positions 557–559 (SAK) are G5.

Belongs to the TRAFAC class translation factor GTPase superfamily. Classic translation factor GTPase family. IF-2 subfamily.

The protein resides in the cytoplasm. Its function is as follows. One of the essential components for the initiation of protein synthesis. Protects formylmethionyl-tRNA from spontaneous hydrolysis and promotes its binding to the 30S ribosomal subunits. Also involved in the hydrolysis of GTP during the formation of the 70S ribosomal complex. The chain is Translation initiation factor IF-2 from Azobacteroides pseudotrichonymphae genomovar. CFP2.